We begin with the raw amino-acid sequence, 360 residues long: E3 ubiquitin-protein ligase RNF146 (360 aa).

The RING-type zinc finger occupies 37-75; that stretch reads CAICLQTCVHPVSLPCKHVFCYLCVKGASWLGKRCALCR. Glycyl lysine isopeptide (Lys-Gly) (interchain with G-Cter in ubiquitin) cross-links involve residues K85 and K95. One can recognise a WWE domain in the interval 92–168; that stretch reads EELKAASRGN…EHGRRRKIKR (77 aa). Y108, R111, and W115 together coordinate a glycoprotein. Residue K131 forms a Glycyl lysine isopeptide (Lys-Gly) (interchain with G-Cter in ubiquitin) linkage. A glycoprotein is bound by residues Y145, Q154, R164, and K176. A Glycyl lysine isopeptide (Lys-Gly) (interchain with G-Cter in ubiquitin) cross-link involves residue K176. The interval 259–360 is disordered; sequence ERSHRGEGEE…PDGQCTVTEV (102 aa). Residues 284–294 are compositionally biased toward acidic residues; that stretch reads SIEETESDASS. Residues S290 and S294 each carry the phosphoserine modification. Positions 295–305 are enriched in low complexity; that stretch reads DSENVSSAVVA. Residues 307–333 show a composition bias toward polar residues; the sequence is HSLTQQRLLVSNANQTVSDRSDQSGTD.

As to quaternary structure, can form homooligomers. Interacts with PARsylated AXIN1, AXIN2, BLZF1, CASC3, H1-2, IPO7, LIG3, NCL, PARP1, XRCC1, XRCC5 and XRCC6. Interacts with DDB1, DHX15, IQGAP1, LRPPRC, PARP2, PRKDC, RUVBL2, TNKS1 and TNKS2. Binding often leads to interactor ubiquitination, in the presence of the appropriate E1 and E2 enzymes, and proteasomal degradation. Ubiquitinated; autoubiquitinated. Autoubiquitination is enhanced upon poly(ADP-ribose)-binding.

It is found in the cytoplasm. The protein localises to the cytosol. It localises to the nucleus. The enzyme catalyses S-ubiquitinyl-[E2 ubiquitin-conjugating enzyme]-L-cysteine + [acceptor protein]-L-lysine = [E2 ubiquitin-conjugating enzyme]-L-cysteine + N(6)-ubiquitinyl-[acceptor protein]-L-lysine.. It functions in the pathway protein modification; protein ubiquitination. E3 ubiquitin-protein ligase that specifically binds poly-ADP-ribosylated (PARsylated) proteins and mediates their ubiquitination and subsequent degradation. May regulate many important biological processes, such as cell survival and DNA damage response. Acts as an activator of the Wnt signaling pathway by mediating the ubiquitination of PARsylated AXIN1 and AXIN2, 2 key components of the beta-catenin destruction complex. Acts in cooperation with tankyrase proteins (TNKS and TNKS2), which mediate PARsylation of target proteins AXIN1, AXIN2, BLZF1, CASC3, TNKS and TNKS2. Recognizes and binds tankyrase-dependent PARsylated proteins via its WWE domain and mediates their ubiquitination, leading to their degradation. Different ubiquitin linkage types have been observed: TNKS2 undergoes ubiquitination at 'Lys-48' and 'Lys-63', while AXIN1 is only ubiquitinated at 'Lys-48'. May regulate TNKS and TNKS2 subcellular location, preventing aggregation at a centrosomal location. Neuroprotective protein. Protects the brain against N-methyl-D-aspartate (NMDA) receptor-mediated glutamate excitotoxicity and ischemia, by interfering with PAR-induced cell death, called parthanatos. Prevents nuclear translocation of AIFM1 in a PAR-binding dependent manner. Does not affect PARP1 activation. Protects against cell death induced by DNA damaging agents, such as N-methyl-N-nitro-N-nitrosoguanidine (MNNG) and rescues cells from G1 arrest. Promotes cell survival after gamma-irradiation. Facilitates DNA repair. This Macaca fascicularis (Crab-eating macaque) protein is E3 ubiquitin-protein ligase RNF146 (RNF146).